The primary structure comprises 417 residues: MEFVKCLGHPEEFYNLLRFQMGGRRKVIPKMDQDSLSSSLKTCYKYLNQTSRSFAAVIQALDGEMRHAVCIFYLVLRALDTLEDDMTISIERKVPLLHNFHSYLYEPDWRFTESKEKDRQVLEDFPTISLEFRNLAEKYQTVIVDVCQKMGFGMAEFLDKRVTSEREWDKYCHYVAGLVGIGLSRLFPASELEDPLIGEDTERANSMGLFLQKTNIIRDYLEDQREGREFWPQETWSKYVKKLGDFAKPENIDLAVQCLNELITNTLHHIPDVITYLSRLRNQSIFNFCAIPQVMAIATLAACYNNQQVFKGVVKIRKGQAVTLMMDATNMPAVKAIIHQYMEEIYHRIPNSDPCSTKTQQIISTIRTQNLPNCQLVSRSHYSPIYLSFVMLLAALSWQYLSTLSQVTEDYVQTGEH.

NADP(+)-binding residues include Arg52 and Arg77. Mg(2+)-binding residues include Asp80, Glu83, and Asp84. Position 218 (Arg218) interacts with NADP(+). The helical transmembrane segment at 284–304 (SIFNFCAIPQVMAIATLAACY) threads the bilayer. NADP(+) is bound by residues Lys315 and Arg317. A helical membrane pass occupies residues 384–404 (PIYLSFVMLLAALSWQYLSTL).

It belongs to the phytoene/squalene synthase family. Mg(2+) serves as cofactor.

The protein localises to the endoplasmic reticulum membrane. The enzyme catalyses 2 (2E,6E)-farnesyl diphosphate + NADPH + H(+) = squalene + 2 diphosphate + NADP(+). It catalyses the reaction 2 (2E,6E)-farnesyl diphosphate + NADH + H(+) = squalene + 2 diphosphate + NAD(+). The catalysed reaction is presqualene diphosphate + NADH + H(+) = squalene + diphosphate + NAD(+). It carries out the reaction presqualene diphosphate + NADPH + H(+) = squalene + diphosphate + NADP(+). The enzyme catalyses 2 (2E,6E)-farnesyl diphosphate = presqualene diphosphate + diphosphate. It participates in terpene metabolism; lanosterol biosynthesis; lanosterol from farnesyl diphosphate: step 1/3. Functionally, catalyzes the condensation of 2 farnesyl pyrophosphate (FPP) moieties to form squalene. Proceeds in two distinct steps. In the first half-reaction, two molecules of FPP react to form the stable presqualene diphosphate intermediate (PSQPP), with concomitant release of a proton and a molecule of inorganic diphosphate. In the second half-reaction, PSQPP undergoes heterolysis, isomerization, and reduction with NADPH or NADH to form squalene. It is the first committed enzyme of the sterol biosynthesis pathway. The protein is Squalene synthase (FDFT1) of Bos taurus (Bovine).